The primary structure comprises 119 residues: Ribonuclease P protein component (119 aa).

It belongs to the RnpA family. As to quaternary structure, consists of a catalytic RNA component (M1 or rnpB) and a protein subunit.

It catalyses the reaction Endonucleolytic cleavage of RNA, removing 5'-extranucleotides from tRNA precursor.. Its function is as follows. RNaseP catalyzes the removal of the 5'-leader sequence from pre-tRNA to produce the mature 5'-terminus. It can also cleave other RNA substrates such as 4.5S RNA. The protein component plays an auxiliary but essential role in vivo by binding to the 5'-leader sequence and broadening the substrate specificity of the ribozyme. The polypeptide is Ribonuclease P protein component (Bacillus pumilus (strain SAFR-032)).